A 136-amino-acid polypeptide reads, in one-letter code: Blasticidin-S acetyltransferase (136 aa).

One can recognise an N-acetyltransferase domain in the interval 1-136; sequence MLSLPRLQTV…ITSHLLVKEL (136 aa).

In terms of biological role, confers resistance to blasticidin S antibiotic. The protein is Blasticidin-S acetyltransferase (bls) of Streptomyces morookaense (Streptoverticillium morookaense).